Reading from the N-terminus, the 147-residue chain is Prefoldin subunit alpha (147 aa).

The protein belongs to the prefoldin alpha subunit family. As to quaternary structure, heterohexamer of two alpha and four beta subunits.

It is found in the cytoplasm. Its function is as follows. Molecular chaperone capable of stabilizing a range of proteins. Seems to fulfill an ATP-independent, HSP70-like function in archaeal de novo protein folding. This Saccharolobus islandicus (strain M.16.27) (Sulfolobus islandicus) protein is Prefoldin subunit alpha.